The sequence spans 490 residues: Ribosome biogenesis protein YTM1 (490 aa).

The interval 1–22 (MDGLEDGPLDASTATSQKPQRQ) is disordered. Residues 23 to 104 (VRLKLTSRHE…ETTLDVEYVR (82 aa)) form a ubiquitin-like (UBL) domain region. WD repeat units follow at residues 116-168 (LHDD…IALS), 175-213 (GHTA…DGFS), 224-263 (GHKG…NPAA), 298-338 (SHTA…LVDT), 340-379 (TASH…TTVS), 385-425 (GHTN…TDKD), and 449-487 (GEGV…PNGG). The segment at 255–286 (TRKSENPAAPESLLPSNTSRSSKRRKLNSSVS) is disordered.

It belongs to the WD repeat WDR12/YTM1 family. Component of the NOP7 complex, composed of ERB1, NOP7 and YTM1. The complex is held together by ERB1, which interacts with NOP7 via its N-terminal domain and with YTM1 via a high-affinity interaction between the seven-bladed beta-propeller domains of the 2 proteins. The NOP7 complex associates with the 66S pre-ribosome. Interacts (via UBL domain) with MDN1 (via VWFA/MIDAS domain).

Its subcellular location is the nucleus. It localises to the nucleolus. It is found in the nucleoplasm. Functionally, component of the NOP7 complex, which is required for maturation of the 25S and 5.8S ribosomal RNAs and formation of the 60S ribosome. The protein is Ribosome biogenesis protein YTM1 of Ajellomyces capsulatus (strain NAm1 / WU24) (Darling's disease fungus).